We begin with the raw amino-acid sequence, 746 residues long: MAEAVERTDEMVREYLLFRGFTHTLRQLDAEIKADKEKGFRVDKIVDQLQQLMQVYDLAALRDYWNYLERRLFSRLEDVYRPTINKLKTSLFRFYLVYTIQTNRSDKAQEFFAKQASELQNQAEWKDWFVLPFLPSPDTNPTFATYFSRQWADTFIVSLHNFLSVLFQCMPVPVILNFDAECQRTNQVQEENEVLRQKLFALQAEIHRLKKEEQQPEEEEALVQHKLPPYVSNMDRLGDSELAMVCSQRNASLSQSPRVGFLSSLLPQSKKSPSRLSPAQGPPQTQSSAKKESFGSQTTKGREPAGAPKDGKSLFGGLAPGESSWSQHRQRRLQDHGKERKELLSMTLQCAEKKPEAGGPEAEPCPEPHVEALETLTRVPTAGPEGGGVRPEQPFIVLGQEEYGEHHSSIMHCRVDCSGRRVASLDVDGVIKVWSFNPIMQTKASSISKSPLLSLEWATKRDRLLLLGSGVGTVRLYDTEAKKNLCEININDDMPRILSLACSPSGASFVCSAAASSLTAHVDVLAPDIGSRGTNQVPGRLLLWDTKTMKQQLQFSLDPEPIAINCTAFNHNGNLLVTGAADGVIRLFDMQQHECAMSWKAHCGEVYSVEFSYDENTVYSIGEDGKFIQWNIHKSGLKVSEYGLPADATGPFVLSGYSGYKQVQVPRGRLFAFDSEGNYMLTCSATGGVIYKLGGDDKVLESCVSLGGHRAPVVTVDWSTAMDCGTCLTASMDGKIKLTTLLAHKV.

Residues glutamine 183 to glutamine 215 adopt a coiled-coil conformation. Serine 256 bears the Phosphoserine mark. A compositionally biased stretch (low complexity) spans leucine 265–proline 278. The disordered stretch occupies residues leucine 265 to histidine 336. A compositionally biased stretch (polar residues) spans proline 282–threonine 299. Phosphoserine is present on residues serine 288 and serine 293. WD repeat units follow at residues glutamate 405–alanine 444, isoleucine 447–glutamate 487, alanine 514–glutamine 554, proline 559–serine 598, alanine 601–serine 640, valine 663–glutamate 701, and glycine 708–valine 746.

This sequence belongs to the WD repeat WDR91 family. In terms of assembly, interacts with WDR81; involved in early to late endosome cargo transport. Interacts with BECN1; negatively regulates the PI3 kinase/PI3K activity associated with endosomal membranes.

It is found in the early endosome membrane. The protein localises to the late endosome membrane. Its function is as follows. Functions as a negative regulator of the PI3 kinase/PI3K activity associated with endosomal membranes via BECN1, a core subunit of the PI3K complex. By modifying the phosphatidylinositol 3-phosphate/PtdInsP3 content of endosomal membranes may regulate endosome fusion, recycling, sorting and early to late endosome transport. It is for instance, required for the delivery of cargos like BST2/tetherin from early to late endosome and thereby participates indirectly to their degradation by the lysosome. May play a role in meiosis. The polypeptide is WD repeat-containing protein 91 (Bos taurus (Bovine)).